Consider the following 275-residue polypeptide: Glutamate racemase (275 aa).

Residues 12–13 (DS) and 44–45 (YG) contribute to the substrate site. Cys-75 functions as the Proton donor/acceptor in the catalytic mechanism. Residue 76-77 (NT) coordinates substrate. Cys-185 functions as the Proton donor/acceptor in the catalytic mechanism. 186-187 (TH) serves as a coordination point for substrate.

It belongs to the aspartate/glutamate racemases family.

The enzyme catalyses L-glutamate = D-glutamate. It functions in the pathway cell wall biogenesis; peptidoglycan biosynthesis. Its function is as follows. Provides the (R)-glutamate required for cell wall biosynthesis. The chain is Glutamate racemase from Mycobacterium avium (strain 104).